A 131-amino-acid polypeptide reads, in one-letter code: Translation initiation factor 5A (131 aa).

The residue at position 36 (K36) is a Hypusine.

It belongs to the eIF-5A family. The N-terminus is blocked.

Its subcellular location is the cytoplasm. In terms of biological role, functions by promoting the formation of the first peptide bond. This chain is Translation initiation factor 5A (eif5a), found in Sulfolobus acidocaldarius (strain ATCC 33909 / DSM 639 / JCM 8929 / NBRC 15157 / NCIMB 11770).